Reading from the N-terminus, the 61-residue chain is UPF0434 protein Pfl01_4174 (61 aa).

It belongs to the UPF0434 family.

The protein is UPF0434 protein Pfl01_4174 of Pseudomonas fluorescens (strain Pf0-1).